Reading from the N-terminus, the 228-residue chain is Glyceraldehyde 3-phosphate phosphatase (228 aa).

Belongs to the HAD-like hydrolase superfamily. The cofactor is Mg(2+).

Catalyzes the dephosphorylation of D,L-glyceraldehyde 3-phosphate in vitro. This Methanocaldococcus jannaschii (strain ATCC 43067 / DSM 2661 / JAL-1 / JCM 10045 / NBRC 100440) (Methanococcus jannaschii) protein is Glyceraldehyde 3-phosphate phosphatase.